We begin with the raw amino-acid sequence, 391 residues long: GTPase Obg (391 aa).

The Obg domain maps to 1–159 (MKFIDEALIR…RDLLLELMLL (159 aa)). Residues 160-333 (ADVGMLGLPN…LTRDIMDFIE (174 aa)) enclose the OBG-type G domain. Residues 166–173 (GLPNAGKS), 191–195 (FTTLV), 213–216 (DIPG), 283–286 (NKID), and 314–316 (SAA) each bind GTP. Mg(2+) contacts are provided by Ser173 and Thr193.

It belongs to the TRAFAC class OBG-HflX-like GTPase superfamily. OBG GTPase family. Monomer. It depends on Mg(2+) as a cofactor.

The protein resides in the cytoplasm. An essential GTPase which binds GTP, GDP and possibly (p)ppGpp with moderate affinity, with high nucleotide exchange rates and a fairly low GTP hydrolysis rate. Plays a role in control of the cell cycle, stress response, ribosome biogenesis and in those bacteria that undergo differentiation, in morphogenesis control. This Actinobacillus pleuropneumoniae serotype 7 (strain AP76) protein is GTPase Obg.